The following is a 150-amino-acid chain: Large ribosomal subunit protein uL13 (150 aa).

This sequence belongs to the universal ribosomal protein uL13 family. Part of the 50S ribosomal subunit.

In terms of biological role, this protein is one of the early assembly proteins of the 50S ribosomal subunit, although it is not seen to bind rRNA by itself. It is important during the early stages of 50S assembly. In Chlamydia caviae (strain ATCC VR-813 / DSM 19441 / 03DC25 / GPIC) (Chlamydophila caviae), this protein is Large ribosomal subunit protein uL13.